The primary structure comprises 233 residues: 5'-methylthioadenosine/S-adenosylhomocysteine nucleosidase (233 aa).

Catalysis depends on Glu12, which acts as the Proton acceptor. Residues Gly78, Ile156, and 177 to 178 each bind substrate; that span reads ME. Catalysis depends on Asp201, which acts as the Proton donor.

The protein belongs to the PNP/UDP phosphorylase family. MtnN subfamily.

The enzyme catalyses S-adenosyl-L-homocysteine + H2O = S-(5-deoxy-D-ribos-5-yl)-L-homocysteine + adenine. It carries out the reaction S-methyl-5'-thioadenosine + H2O = 5-(methylsulfanyl)-D-ribose + adenine. It catalyses the reaction 5'-deoxyadenosine + H2O = 5-deoxy-D-ribose + adenine. It functions in the pathway amino-acid biosynthesis; L-methionine biosynthesis via salvage pathway; S-methyl-5-thio-alpha-D-ribose 1-phosphate from S-methyl-5'-thioadenosine (hydrolase route): step 1/2. Functionally, catalyzes the irreversible cleavage of the glycosidic bond in both 5'-methylthioadenosine (MTA) and S-adenosylhomocysteine (SAH/AdoHcy) to adenine and the corresponding thioribose, 5'-methylthioribose and S-ribosylhomocysteine, respectively. Also cleaves 5'-deoxyadenosine, a toxic by-product of radical S-adenosylmethionine (SAM) enzymes, into 5-deoxyribose and adenine. This chain is 5'-methylthioadenosine/S-adenosylhomocysteine nucleosidase, found in Listeria monocytogenes serotype 4b (strain F2365).